Here is a 170-residue protein sequence, read N- to C-terminus: ATP synthase subunit b (170 aa).

A helical membrane pass occupies residues 30-50; it reads FFFVLAIFLVVLAVIGTFVVP.

Belongs to the ATPase B chain family. F-type ATPases have 2 components, F(1) - the catalytic core - and F(0) - the membrane proton channel. F(1) has five subunits: alpha(3), beta(3), gamma(1), delta(1), epsilon(1). F(0) has three main subunits: a(1), b(2) and c(10-14). The alpha and beta chains form an alternating ring which encloses part of the gamma chain. F(1) is attached to F(0) by a central stalk formed by the gamma and epsilon chains, while a peripheral stalk is formed by the delta and b chains.

The protein localises to the cell membrane. F(1)F(0) ATP synthase produces ATP from ADP in the presence of a proton or sodium gradient. F-type ATPases consist of two structural domains, F(1) containing the extramembraneous catalytic core and F(0) containing the membrane proton channel, linked together by a central stalk and a peripheral stalk. During catalysis, ATP synthesis in the catalytic domain of F(1) is coupled via a rotary mechanism of the central stalk subunits to proton translocation. Its function is as follows. Component of the F(0) channel, it forms part of the peripheral stalk, linking F(1) to F(0). This is ATP synthase subunit b from Mycobacterium ulcerans (strain Agy99).